Consider the following 515-residue polypeptide: Bifunctional dihydrofolate reductase-thymidylate synthase (515 aa).

Residues 26–228 (AFSIVVAADQ…LSYEIMKYVP (203 aa)) form the DHFR domain. Val30 lines the substrate pocket. NADP(+) contacts are provided by residues Ala32, 38 to 44 (GIGDGET), 81 to 83 (RKT), and 101 to 104 (LSCR). Residues Ile154, Tyr160, and Thr178 each coordinate substrate. 155–162 (GGARVYTE) provides a ligand contact to NADP(+). Residues 233–515 (ERQYLELIDR…YPPIKMEMAV (283 aa)) form a thymidylate synthase region. Residue Arg253 participates in dUMP binding. The active site involves Cys395. Residues His396, 416 to 420 (QRCCD), Asn428, and 458 to 460 (HVY) contribute to the dUMP site.

In the N-terminal section; belongs to the dihydrofolate reductase family. This sequence in the C-terminal section; belongs to the thymidylate synthase family.

The catalysed reaction is (6S)-5,6,7,8-tetrahydrofolate + NADP(+) = 7,8-dihydrofolate + NADPH + H(+). It carries out the reaction dUMP + (6R)-5,10-methylene-5,6,7,8-tetrahydrofolate = 7,8-dihydrofolate + dTMP. It participates in cofactor biosynthesis; tetrahydrofolate biosynthesis; 5,6,7,8-tetrahydrofolate from 7,8-dihydrofolate: step 1/1. In terms of biological role, bifunctional enzyme. Involved in de novo dTMP biosynthesis. Key enzyme in folate metabolism. Catalyzes an essential reaction for de novo glycine and purine synthesis, DNA precursor synthesis, and for the conversion of dUMP to dTMP. This Crithidia fasciculata protein is Bifunctional dihydrofolate reductase-thymidylate synthase.